Here is a 61-residue protein sequence, read N- to C-terminus: Small ribosomal subunit protein uS14B (61 aa).

4 residues coordinate Zn(2+): Cys-24, Cys-27, Cys-40, and Cys-43.

This sequence belongs to the universal ribosomal protein uS14 family. Zinc-binding uS14 subfamily. As to quaternary structure, part of the 30S ribosomal subunit. Contacts proteins S3 and S10. Zn(2+) is required as a cofactor.

Binds 16S rRNA, required for the assembly of 30S particles and may also be responsible for determining the conformation of the 16S rRNA at the A site. The sequence is that of Small ribosomal subunit protein uS14B from Saccharopolyspora erythraea (strain ATCC 11635 / DSM 40517 / JCM 4748 / NBRC 13426 / NCIMB 8594 / NRRL 2338).